Reading from the N-terminus, the 115-residue chain is Probable non-functional immunoglobulin heavy variable 8-51-1 (115 aa).

The first 17 residues, 1 to 17 (MLVCVLLYSFRLFGIQG), serve as a signal peptide directing secretion. The tract at residues 18-42 (EAQLTESGGDLVHLEGPLRLSCAAS) is framework-1. Residues 19 to 115 (AQLTESGGDL…QNMAAFNCAG (97 aa)) form the Ig-like domain. Residues 43 to 50 (WFTFSIYE) are complementarity-determining-1. The tract at residues 51–67 (IHWVCQASGKGLEWVAV) is framework-2. Cys55 and Cys113 form a disulfide bridge. The complementarity-determining-2 stretch occupies residues 68–75 (IWRGESHQ). The tract at residues 76–113 (YNADYVRGRLTTSRDNTKYMLYMQMISLRTQNMAAFNC) is framework-3. A complementarity-determining-3 region spans residues 114–115 (AG).

In terms of assembly, immunoglobulins are composed of two identical heavy chains and two identical light chains; disulfide-linked.

It localises to the secreted. The protein localises to the cell membrane. Functionally, probable non-functional open reading frame (ORF) of V region of the variable domain of immunoglobulin heavy chains. Non-functional ORF generally cannot participate in the synthesis of a productive immunoglobulin chain due to altered V-(D)-J or switch recombination and/or splicing site (at mRNA level) and/or conserved amino acid change (protein level). Immunoglobulins, also known as antibodies, are membrane-bound or secreted glycoproteins produced by B lymphocytes. In the recognition phase of humoral immunity, the membrane-bound immunoglobulins serve as receptors which, upon binding of a specific antigen, trigger the clonal expansion and differentiation of B lymphocytes into immunoglobulins-secreting plasma cells. Secreted immunoglobulins mediate the effector phase of humoral immunity, which results in the elimination of bound antigens. The antigen binding site is formed by the variable domain of one heavy chain, together with that of its associated light chain. Thus, each immunoglobulin has two antigen binding sites with remarkable affinity for a particular antigen. The variable domains are assembled by a process called V-(D)-J rearrangement and can then be subjected to somatic hypermutations which, after exposure to antigen and selection, allow affinity maturation for a particular antigen. The sequence is that of Probable non-functional immunoglobulin heavy variable 8-51-1 from Homo sapiens (Human).